Consider the following 58-residue polypeptide: Large ribosomal subunit protein bL32c (58 aa).

The segment at 1 to 23 (MAVPKKRTSKAKKNARKSVWKKK) is disordered.

It belongs to the bacterial ribosomal protein bL32 family.

The protein resides in the plastid. Its subcellular location is the chloroplast. The protein is Large ribosomal subunit protein bL32c (rpl32-A) of Trieres chinensis (Marine centric diatom).